The following is a 740-amino-acid chain: Catalase-peroxidase (740 aa).

The first 27 residues, 1 to 27 (MFKSTLPIAAAISVALTSMVLPAKALA), serve as a signal peptide directing secretion. The tryptophyl-tyrosyl-methioninium (Trp-Tyr) (with M-254) cross-link spans 106–228 (WHSAGVYRVH…LAAVEMGLIY (123 aa)). The active-site Proton acceptor is H107. The tryptophyl-tyrosyl-methioninium (Tyr-Met) (with W-106) cross-link spans 228–254 (YVNPEGPHGKPDPLLAANDIRMSFGRM). A heme b-binding site is contributed by H269.

It belongs to the peroxidase family. Peroxidase/catalase subfamily. Homodimer or homotetramer. It depends on heme b as a cofactor. In terms of processing, formation of the three residue Trp-Tyr-Met cross-link is important for the catalase, but not the peroxidase activity of the enzyme.

It carries out the reaction H2O2 + AH2 = A + 2 H2O. It catalyses the reaction 2 H2O2 = O2 + 2 H2O. Its function is as follows. Bifunctional enzyme with both catalase and broad-spectrum peroxidase activity. In Colwellia psychrerythraea (strain 34H / ATCC BAA-681) (Vibrio psychroerythus), this protein is Catalase-peroxidase.